Reading from the N-terminus, the 498-residue chain is Flavin-dependent halogenase otaD (498 aa).

Residues glycine 14, glycine 17, and glutamate 47 each contribute to the FAD site. Residues serine 326 and glycine 327 each coordinate chloride. Valine 328 is a binding site for FAD.

This sequence belongs to the flavin-dependent halogenase family.

It catalyses the reaction ochratoxin B + FADH2 + chloride + O2 = ochratoxin A + FAD + 2 H2O. Its pathway is mycotoxin biosynthesis. Its function is as follows. Flavin-dependent halogenase; part of the gene cluster that mediates the biosynthesis of ochratoxin A (OTA), a mycotoxin composed of a chlorinated type I polyketide dihydroisocoumarin moiety linked to L-phenylalanine, and demonstrated to have nephrotoxic, immunotoxic, genotoxic, neurotoxic, and teratogenic properties. OtaD chlorinates ochratoxin B (OTB) at the C-5 position to form OTA. The pathway begins with the highly reducing polyketide synthase otaA that catalyzes the formation of the isocoumarin group during the initial stages of biosynthesis, starting from one acetate and 4 malonate units, to originate the characteristic pentaketide skeleton 7-methylmellein (7-MM) of the OTA molecule. The newly identified cyclase otaY might be involved in the polyketide cyclization reaction during the initial steps of the OTA biosynthesis. 7-MM is then oxidized into 7-carboxymellein (also called ochratoxin beta) by the cytochrome P450 monooxygenase otaC. The NRPS encoded by the otaB gene is involved in the linking of phenylalanine to the dihydroisocoumarin ring. The reaction catalyzed by NRPS results in the production of ochratoxin B (OTB), which is the non-chlorinated analog of OTA and which subsequently serves as the substrate of the halogenase otaD for chlorination activity to form the final molecular structure of OTA, containing a chlorine atom in the C-5 position of the molecule. The sequence is that of Flavin-dependent halogenase otaD from Aspergillus carbonarius (strain ITEM 5010).